The following is a 178-amino-acid chain: Caveolin-1 (178 aa).

Position 2 is an N-acetylserine (Ser2). Residue Ser2 is modified to Phosphoserine. Positions 2–94 (SGGKYVDSEG…WKASFTTFTV (93 aa)) are required for homooligomerization. At 2–104 (SGGKYVDSEG…TKYWFYRLLS (103 aa)) the chain is on the cytoplasmic side. Lys5 carries the N6-acetyllysine; alternate modification. A Glycyl lysine isopeptide (Lys-Gly) (interchain with G-Cter in ubiquitin); alternate cross-link involves residue Lys5. Tyr6 carries the post-translational modification Phosphotyrosine. Ser9 carries the phosphoserine modification. Residue Tyr14 is modified to Phosphotyrosine; by ABL1. Tyr25 is modified (phosphotyrosine). Glycyl lysine isopeptide (Lys-Gly) (interchain with G-Cter in ubiquitin) cross-links involve residues Lys26 and Lys30. Phosphoserine is present on Ser37. Residues Lys39, Lys47, and Lys57 each participate in a glycyl lysine isopeptide (Lys-Gly) (interchain with G-Cter in ubiquitin) cross-link. The interaction with CAVIN3 stretch occupies residues 82-94 (DGIWKASFTTFTV). The helical intramembrane region spans 105–125 (ALFGIPMALIWGIYFAILSFL). Over 126–178 (HIWAVVPCIKSFLIEIQCISRVYSIYVHTVCDPLFEAVGKIFSNVRINLQKEI) the chain is Cytoplasmic. Positions 131–142 (VPCIKSFLIEIQ) are interacts with SPRY1, SPRY2, SPRY3 and SPRY4. S-palmitoyl cysteine attachment occurs at residues Cys133, Cys143, and Cys156. Positions 149-160 (SIYVHTVCDPLF) are interacts with SPRY1, SPRY2, and SPRY4. Residues 167–178 (FSNVRINLQKEI) form an interacts with SPRY1, SPRY2, SPRY3 and SPRY4 region.

This sequence belongs to the caveolin family. Homooligomer. Interacts with GLIPR2. Interacts with NOSTRIN. Interacts with SNAP25 and STX1A. Interacts (via the N-terminus) with DPP4; the interaction is direct. Interacts with CTNNB1, CDH1 and JUP. Interacts with PACSIN2; this interaction induces membrane tubulation. Interacts with SLC7A9. Interacts with BMX and BTK. Interacts with TGFBR1. Interacts with CAVIN3 (via leucine-zipper domain) in a cholesterol-sensitive manner. Interacts with CAVIN1. Interacts with EHD2 in a cholesterol-dependent manner. Forms a ternary complex with UBXN6 and VCP; mediates CAV1 targeting to lysosomes for degradation. Interacts with ABCG1; this interaction regulates ABCG1-mediated cholesterol efflux. Interacts with NEU3; this interaction enhances NEU3 sialidase activity within caveola. Interacts (via C-terminus) with SPRY1, SPRY2 (via C-terminus), SPRY3, and SPRY4. Interacts with IGFBP5; this interaction allows trafficking of IGFBP5 from the plasma membrane to the nucleus. In terms of processing, phosphorylated at Tyr-14 by ABL1 in response to oxidative stress. Post-translationally, ubiquitinated. Undergo monoubiquitination and multi- and/or polyubiquitination. Monoubiquitination of N-terminal lysines promotes integration in a ternary complex with UBXN6 and VCP which promotes oligomeric CAV1 targeting to lysosomes for degradation. Ubiquitinated by ZNRF1; leading to degradation and modulation of the TLR4-mediated immune response.

It localises to the golgi apparatus membrane. The protein localises to the cell membrane. It is found in the membrane. Its subcellular location is the caveola. The protein resides in the membrane raft. Functionally, may act as a scaffolding protein within caveolar membranes. Forms a stable heterooligomeric complex with CAV2 that targets to lipid rafts and drives caveolae formation. Mediates the recruitment of CAVIN proteins (CAVIN1/2/3/4) to the caveolae. Interacts directly with G-protein alpha subunits and can functionally regulate their activity. Involved in the costimulatory signal essential for T-cell receptor (TCR)-mediated T-cell activation. Its binding to DPP4 induces T-cell proliferation and NF-kappa-B activation in a T-cell receptor/CD3-dependent manner. Recruits CTNNB1 to caveolar membranes and may regulate CTNNB1-mediated signaling through the Wnt pathway. Negatively regulates TGFB1-mediated activation of SMAD2/3 by mediating the internalization of TGFBR1 from membrane rafts leading to its subsequent degradation. Binds 20(S)-hydroxycholesterol (20(S)-OHC). This chain is Caveolin-1 (CAV1), found in Pongo abelii (Sumatran orangutan).